A 221-amino-acid polypeptide reads, in one-letter code: Immediate early response gene 2 protein (221 aa).

Met1 carries the post-translational modification N-acetylmethionine. The tract at residues 54 to 156 (THQPEFPPSR…EGEATSEVSN (103 aa)) is disordered. Residues 64 to 77 (RALDPRLHPPREPE) show a composition bias toward basic and acidic residues. Residues 125-136 (SDLSDGSDAGLV) are compositionally biased toward low complexity.

It belongs to the IER family.

The protein resides in the cytoplasm. The protein localises to the nucleus. Its function is as follows. DNA-binding protein that seems to act as a transcription factor. Involved in the regulation of neuronal differentiation, acts upon JNK-signaling pathway activation and plays a role in neurite outgrowth in hippocampal cells. May mediate with FIBP FGF-signaling in the establishment of laterality in the embryo. Promotes cell motility, seems to stimulate tumor metastasis. The protein is Immediate early response gene 2 protein (Ier2) of Rattus norvegicus (Rat).